The primary structure comprises 458 residues: Bifunctional protein GlmU (458 aa).

The tract at residues 1-229 (MTNYAIILAA…FNESLGVNDR (229 aa)) is pyrophosphorylase. Residues 8 to 11 (LAAG), Lys-22, Gln-72, and 77 to 78 (GT) contribute to the UDP-N-acetyl-alpha-D-glucosamine site. Asp-102 is a Mg(2+) binding site. Residues Gly-139, Glu-154, Asn-169, and Asn-227 each contribute to the UDP-N-acetyl-alpha-D-glucosamine site. A Mg(2+)-binding site is contributed by Asn-227. The segment at 230-250 (VALATAESVMRRRINKAHMIN) is linker. The tract at residues 251 to 458 (GVTFQNPDAT…AKRLPHYPQK (208 aa)) is N-acetyltransferase. The UDP-N-acetyl-alpha-D-glucosamine site is built by Arg-332 and Lys-350. His-362 functions as the Proton acceptor in the catalytic mechanism. Tyr-365 and Asn-376 together coordinate UDP-N-acetyl-alpha-D-glucosamine. Acetyl-CoA contacts are provided by residues Ala-379, 385–386 (NY), Ser-404, Ala-422, and Arg-439.

In the N-terminal section; belongs to the N-acetylglucosamine-1-phosphate uridyltransferase family. The protein in the C-terminal section; belongs to the transferase hexapeptide repeat family. Homotrimer. It depends on Mg(2+) as a cofactor.

The protein resides in the cytoplasm. It catalyses the reaction alpha-D-glucosamine 1-phosphate + acetyl-CoA = N-acetyl-alpha-D-glucosamine 1-phosphate + CoA + H(+). The catalysed reaction is N-acetyl-alpha-D-glucosamine 1-phosphate + UTP + H(+) = UDP-N-acetyl-alpha-D-glucosamine + diphosphate. It participates in nucleotide-sugar biosynthesis; UDP-N-acetyl-alpha-D-glucosamine biosynthesis; N-acetyl-alpha-D-glucosamine 1-phosphate from alpha-D-glucosamine 6-phosphate (route II): step 2/2. Its pathway is nucleotide-sugar biosynthesis; UDP-N-acetyl-alpha-D-glucosamine biosynthesis; UDP-N-acetyl-alpha-D-glucosamine from N-acetyl-alpha-D-glucosamine 1-phosphate: step 1/1. The protein operates within bacterial outer membrane biogenesis; LPS lipid A biosynthesis. Catalyzes the last two sequential reactions in the de novo biosynthetic pathway for UDP-N-acetylglucosamine (UDP-GlcNAc). The C-terminal domain catalyzes the transfer of acetyl group from acetyl coenzyme A to glucosamine-1-phosphate (GlcN-1-P) to produce N-acetylglucosamine-1-phosphate (GlcNAc-1-P), which is converted into UDP-GlcNAc by the transfer of uridine 5-monophosphate (from uridine 5-triphosphate), a reaction catalyzed by the N-terminal domain. The polypeptide is Bifunctional protein GlmU (Streptococcus uberis (strain ATCC BAA-854 / 0140J)).